The primary structure comprises 274 residues: 3-methyl-2-oxobutanoate hydroxymethyltransferase (274 aa).

Positions 49 and 88 each coordinate Mg(2+). Residues D49–S50, D88, and K118 contribute to the 3-methyl-2-oxobutanoate site. A Mg(2+)-binding site is contributed by E120. The Proton acceptor role is filled by E187.

Belongs to the PanB family. As to quaternary structure, homodecamer; pentamer of dimers. Mg(2+) is required as a cofactor.

The protein resides in the cytoplasm. It catalyses the reaction 3-methyl-2-oxobutanoate + (6R)-5,10-methylene-5,6,7,8-tetrahydrofolate + H2O = 2-dehydropantoate + (6S)-5,6,7,8-tetrahydrofolate. It functions in the pathway cofactor biosynthesis; (R)-pantothenate biosynthesis; (R)-pantoate from 3-methyl-2-oxobutanoate: step 1/2. Catalyzes the reversible reaction in which hydroxymethyl group from 5,10-methylenetetrahydrofolate is transferred onto alpha-ketoisovalerate to form ketopantoate. This is 3-methyl-2-oxobutanoate hydroxymethyltransferase from Paramagnetospirillum magneticum (strain ATCC 700264 / AMB-1) (Magnetospirillum magneticum).